Here is a 468-residue protein sequence, read N- to C-terminus: ATP synthase subunit beta (468 aa).

ATP is bound at residue 155 to 162; the sequence is GGAGVGKT.

It belongs to the ATPase alpha/beta chains family. As to quaternary structure, F-type ATPases have 2 components, CF(1) - the catalytic core - and CF(0) - the membrane proton channel. CF(1) has five subunits: alpha(3), beta(3), gamma(1), delta(1), epsilon(1). CF(0) has three main subunits: a(1), b(2) and c(9-12). The alpha and beta chains form an alternating ring which encloses part of the gamma chain. CF(1) is attached to CF(0) by a central stalk formed by the gamma and epsilon chains, while a peripheral stalk is formed by the delta and b chains.

The protein resides in the cell membrane. It carries out the reaction ATP + H2O + 4 H(+)(in) = ADP + phosphate + 5 H(+)(out). Functionally, produces ATP from ADP in the presence of a proton gradient across the membrane. The catalytic sites are hosted primarily by the beta subunits. The protein is ATP synthase subunit beta of Streptococcus pyogenes serotype M3 (strain ATCC BAA-595 / MGAS315).